We begin with the raw amino-acid sequence, 740 residues long: Elongation factor 2 (740 aa).

One can recognise a tr-type G domain in the interval 23 to 264 (AQIRNAGTLA…MIIEHVPPPN (242 aa)). Residues 32–39 (AHVDHGKT), 98–102 (DTPGH), and 152–155 (NKID) contribute to the GTP site. Position 605 is a diphthamide (His-605).

It belongs to the TRAFAC class translation factor GTPase superfamily. Classic translation factor GTPase family. EF-G/EF-2 subfamily.

It is found in the cytoplasm. Its function is as follows. Catalyzes the GTP-dependent ribosomal translocation step during translation elongation. During this step, the ribosome changes from the pre-translocational (PRE) to the post-translocational (POST) state as the newly formed A-site-bound peptidyl-tRNA and P-site-bound deacylated tRNA move to the P and E sites, respectively. Catalyzes the coordinated movement of the two tRNA molecules, the mRNA and conformational changes in the ribosome. This Pyrobaculum calidifontis (strain DSM 21063 / JCM 11548 / VA1) protein is Elongation factor 2.